Consider the following 247-residue polypeptide: ATP synthase delta chain, chloroplastic (247 aa).

The transit peptide at 1-60 (MAALRLASFTLRPAAAAAASASSGATPAAPRSASFARAARGLPSLRLAPPRRRGDLVRPR) directs the protein to the chloroplast.

Belongs to the ATPase delta chain family. In terms of assembly, F-type ATPases have 2 components, CF(1) - the catalytic core - and CF(0) - the membrane proton channel. CF(1) has five subunits: alpha(3), beta(3), gamma(1), delta(1), epsilon(1). CF(0) has three main subunits: a, b and c.

It is found in the plastid. Its subcellular location is the chloroplast thylakoid membrane. This protein seems to be part of the stalk that links CF(0) to CF(1). It either transmits conformational changes from CF(0) into CF(1) or is implicated in proton conduction. The sequence is that of ATP synthase delta chain, chloroplastic (ATPD) from Sorghum bicolor (Sorghum).